The chain runs to 368 residues: tRNA-specific 2-thiouridylase MnmA (368 aa).

Residues Gly11–Ser18 and Met37 contribute to the ATP site. An interaction with target base in tRNA region spans residues Asn97–Asp99. Catalysis depends on Cys102, which acts as the Nucleophile. Cys102 and Cys199 are joined by a disulfide. Gly127 serves as a coordination point for ATP. The interaction with tRNA stretch occupies residues Lys149–Gln151. Cys199 functions as the Cysteine persulfide intermediate in the catalytic mechanism. Positions Arg311–Tyr312 are interaction with tRNA.

This sequence belongs to the MnmA/TRMU family. In terms of assembly, interacts with TusE.

It localises to the cytoplasm. The enzyme catalyses S-sulfanyl-L-cysteinyl-[protein] + uridine(34) in tRNA + AH2 + ATP = 2-thiouridine(34) in tRNA + L-cysteinyl-[protein] + A + AMP + diphosphate + H(+). Its function is as follows. Catalyzes the 2-thiolation of uridine at the wobble position (U34) of tRNA(Lys), tRNA(Glu) and tRNA(Gln), leading to the formation of s(2)U34, the first step of tRNA-mnm(5)s(2)U34 synthesis. Sulfur is provided by IscS, via a sulfur-relay system. Binds ATP and its substrate tRNAs. The sequence is that of tRNA-specific 2-thiouridylase MnmA from Escherichia coli O157:H7.